The following is a 209-amino-acid chain: Uracil phosphoribosyltransferase (209 aa).

Residues R79, R104, and D131–S139 each bind 5-phospho-alpha-D-ribose 1-diphosphate. Uracil is bound by residues I194 and G199 to A201. D200 is a binding site for 5-phospho-alpha-D-ribose 1-diphosphate.

It belongs to the UPRTase family. Requires Mg(2+) as cofactor.

It carries out the reaction UMP + diphosphate = 5-phospho-alpha-D-ribose 1-diphosphate + uracil. Its pathway is pyrimidine metabolism; UMP biosynthesis via salvage pathway; UMP from uracil: step 1/1. With respect to regulation, allosterically activated by GTP. In terms of biological role, catalyzes the conversion of uracil and 5-phospho-alpha-D-ribose 1-diphosphate (PRPP) to UMP and diphosphate. The polypeptide is Uracil phosphoribosyltransferase (Streptococcus agalactiae serotype III (strain NEM316)).